The sequence spans 571 residues: Sulfite reductase [NADPH] hemoprotein beta-component (571 aa).

[4Fe-4S] cluster contacts are provided by Cys-435, Cys-441, Cys-480, and Cys-484. Position 484 (Cys-484) interacts with siroheme.

Belongs to the nitrite and sulfite reductase 4Fe-4S domain family. Alpha(8)-beta(8). The alpha component is a flavoprotein, the beta component is a hemoprotein. Siroheme serves as cofactor. [4Fe-4S] cluster is required as a cofactor.

It catalyses the reaction hydrogen sulfide + 3 NADP(+) + 3 H2O = sulfite + 3 NADPH + 4 H(+). The protein operates within sulfur metabolism; hydrogen sulfide biosynthesis; hydrogen sulfide from sulfite (NADPH route): step 1/1. Component of the sulfite reductase complex that catalyzes the 6-electron reduction of sulfite to sulfide. This is one of several activities required for the biosynthesis of L-cysteine from sulfate. This Musicola paradisiaca (strain Ech703) (Dickeya paradisiaca) protein is Sulfite reductase [NADPH] hemoprotein beta-component.